A 1706-amino-acid polypeptide reads, in one-letter code: Bifunctional hemolysin/adenylate cyclase (1706 aa).

The interval 1–399 (MQQSHQAGYA…RRPSLGAVER (399 aa)) is a, catalytic. ATP is bound at residue 349–356 (AYGVAGKS). Positions 383 to 405 (VPASPGLRRPSLGAVERQDSGYD) are disordered. Positions 400 to 912 (QDSGYDSLDG…LKHSIKLDVI (513 aa)) are b, Ala/Gly-rich. The required for interaction with CyaC stretch occupies residues 500–698 (LSAAVFGLGE…SVVGAPVAVV (199 aa)). N6-palmitoyl lysine attachment occurs at residues lysine 860 and lysine 983. Residues 913 to 1656 (GGDGDDVVLA…RDADHRVEII (744 aa)) are c. 17 Hemolysin-type calcium-binding repeats span residues 1014 to 1031 (IGGAGNDSITGNAHDNFL), 1032 to 1049 (AGGSGDDRLDGGAGNDTL), 1050 to 1067 (VGGEGQNTVIGGAGDDVF), 1155 to 1172 (WGHDGNDTIRGRGGDDIL), 1173 to 1190 (RGGLGLDTLYGEDGNDIF), 1279 to 1296 (MGQGGDDTVRGGDGDDLL), 1297 to 1314 (FGGDGNDMLYGDAGNDTL), 1315 to 1332 (YGGLGDDTLEGGAGNDWF), 1335 to 1352 (TQAREHDVLRGGDGVDTV), 1411 to 1428 (TGDAQANVLRGAGGADVL), 1429 to 1446 (AGGEGDDVLLGGDGDDQL), 1447 to 1464 (SGDAGRDRLYGEAGDDWF), 1468 to 1484 (AANAGNLLDGGDGRDTV), 1537 to 1554 (IGDAGANVLNGLAGNDVL), 1555 to 1572 (SGGAGDDVLLGDEGSDLL), 1573 to 1590 (SGDAGNDDLFGGQGDDTY), and 1603 to 1620 (ESGGGHDTIRINAGADQL). The segment at 1657–1706 (HAANQAVDQAGIEKLVEAMAQYPDPGAAAAAPPAARVPDTLMQSLAVNWR) is d, Asp/Gly-rich.

It in the N-terminal section; belongs to the adenylyl cyclase class-2 family. This sequence in the C-terminal section; belongs to the RTX prokaryotic toxin family. Post-translationally, released in a processed form. In terms of processing, palmitoylated at Lys-860 and Lys-983 by CyaC. The toxin only becomes active when modified in position Lys-983: palmitoylation is required for efficient membrane insertion and pore formation of the acylated Hemolysin chain.

It localises to the secreted. The protein resides in the host cell membrane. It catalyses the reaction ATP = 3',5'-cyclic AMP + diphosphate. Activated by host calmodulin. Functionally, bifunctional adenylate cyclase toxin-hemolysin that plays a crucial role in host colonization. It causes whooping cough by acting on mammalian cells by elevating cAMP-concentration and thus disrupts normal cell function. Its function is as follows. Adenylate cyclase that is activated by host intracellular calmodulin and catalyzes un-regulated conversion of ATP to cAMP, thereby impairing microbicidal functions of immune effector cells and inducing apoptosis of lung macrophages. Hemolysin that forms small cation-selective membrane channels, leading to hemolytic activity. The hemolytic activity of CyaA is weak compared with that of the HlyA of E.coli. The protein is Bifunctional hemolysin/adenylate cyclase (cya) of Bordetella pertussis (strain Tohama I / ATCC BAA-589 / NCTC 13251).